The primary structure comprises 586 residues: Assimilatory ferredoxin-dependent nitrite reductase (586 aa).

[4Fe-4S] cluster-binding residues include cysteine 411, cysteine 417, cysteine 455, and cysteine 459. A siroheme-binding site is contributed by cysteine 459. The segment at 566–586 is disordered; that stretch reads SWYPFADEDEPPKTEQPMTSD.

Belongs to the nitrite and sulfite reductase 4Fe-4S domain family. In terms of assembly, monomer. The cofactor is siroheme. It depends on [4Fe-4S] cluster as a cofactor.

The catalysed reaction is 6 oxidized [2Fe-2S]-[ferredoxin] + NH4(+) + 2 H2O = nitrite + 6 reduced [2Fe-2S]-[ferredoxin] + 8 H(+). It participates in nitrogen metabolism; nitrate reduction (assimilation). Its activity is regulated as follows. Inhibited by cyanide and azide. Its function is as follows. Catalyzes the reduction of nitrite to ammonium in the nitrate assimilation pathway, using ferredoxin as the electron donor. Can use reduced methyl viologen but neither NADPH nor NADH as electron donors. The protein is Assimilatory ferredoxin-dependent nitrite reductase of Haloferax mediterranei (strain ATCC 33500 / DSM 1411 / JCM 8866 / NBRC 14739 / NCIMB 2177 / R-4) (Halobacterium mediterranei).